The following is a 284-amino-acid chain: Diaminopimelate epimerase (284 aa).

Residues asparagine 13 and asparagine 70 each contribute to the substrate site. Cysteine 79 (proton donor) is an active-site residue. Substrate is bound by residues 80–81, asparagine 167, asparagine 200, and 218–219; these read GN and ER. The Proton acceptor role is filled by cysteine 227. Substrate is bound at residue 228-229; it reads GT.

It belongs to the diaminopimelate epimerase family. In terms of assembly, homodimer.

The protein resides in the cytoplasm. It catalyses the reaction (2S,6S)-2,6-diaminopimelate = meso-2,6-diaminopimelate. Its pathway is amino-acid biosynthesis; L-lysine biosynthesis via DAP pathway; DL-2,6-diaminopimelate from LL-2,6-diaminopimelate: step 1/1. Catalyzes the stereoinversion of LL-2,6-diaminopimelate (L,L-DAP) to meso-diaminopimelate (meso-DAP), a precursor of L-lysine and an essential component of the bacterial peptidoglycan. This is Diaminopimelate epimerase from Prochlorococcus marinus (strain NATL1A).